Consider the following 152-residue polypeptide: Probable methionine-R-sulfoxide reductase B (152 aa).

The MsrB domain maps to 27-151 (QTEWKSVLPN…NSVCMAFEKK (125 aa)). Cysteine 66, cysteine 69, cysteine 116, and cysteine 119 together coordinate Zn(2+). Cysteine 140 acts as the Nucleophile in catalysis.

Belongs to the MsrB Met sulfoxide reductase family. The cofactor is Zn(2+).

The enzyme catalyses L-methionyl-[protein] + [thioredoxin]-disulfide + H2O = L-methionyl-(R)-S-oxide-[protein] + [thioredoxin]-dithiol. Functionally, methionine-sulfoxide reductase that specifically reduces methionine (R)-sulfoxide back to methionine. While in many cases, methionine oxidation is the result of random oxidation following oxidative stress, methionine oxidation is also a post-translational modification that takes place on specific residue. This Caenorhabditis elegans protein is Probable methionine-R-sulfoxide reductase B.